A 513-amino-acid chain; its full sequence is Chromosomal replication initiator protein DnaA (513 aa).

The segment at 1-87 is domain I, interacts with DnaA modulators; that stretch reads MSVELWQQCV…IGSKRSSAPR (87 aa). The tract at residues 87-176 is domain II; the sequence is RAAPNAPLAA…QVEGALKHTS (90 aa). The tract at residues 113 to 163 is disordered; it reads AAPAPAPAPTSAPAKKAAAQKAAEVSEEPSRDSFDPMAGASSQQAPVRAEQ. Over residues 123-135 the composition is skewed to low complexity; the sequence is SAPAKKAAAQKAA. Residues 177–393 are domain III, AAA+ region; sequence YLNRTFTFEN…GALKRVIAHS (217 aa). ATP is bound by residues Gly221, Gly223, Lys224, and Thr225. Positions 394 to 513 are domain IV, binds dsDNA; sequence HFMGRDITIE…YKNLLRTLTT (120 aa).

Belongs to the DnaA family. In terms of assembly, oligomerizes as a right-handed, spiral filament on DNA at oriC.

It localises to the cytoplasm. Functionally, plays an essential role in the initiation and regulation of chromosomal replication. ATP-DnaA binds to the origin of replication (oriC) to initiate formation of the DNA replication initiation complex once per cell cycle. Binds the DnaA box (a 9 base pair repeat at the origin) and separates the double-stranded (ds)DNA. Forms a right-handed helical filament on oriC DNA; dsDNA binds to the exterior of the filament while single-stranded (ss)DNA is stabiized in the filament's interior. The ATP-DnaA-oriC complex binds and stabilizes one strand of the AT-rich DNA unwinding element (DUE), permitting loading of DNA polymerase. After initiation quickly degrades to an ADP-DnaA complex that is not apt for DNA replication. Binds acidic phospholipids. The chain is Chromosomal replication initiator protein DnaA from Pseudomonas fluorescens (strain ATCC BAA-477 / NRRL B-23932 / Pf-5).